Here is a 92-residue protein sequence, read N- to C-terminus: Conotoxin Mr15.3 (92 aa).

An N-terminal signal peptide occupies residues 1 to 20 (MSTLKMMLLILLLLLPMATF). Positions 21-53 (DSDGQAIPGGGIPSAVNSRVRGDEKSGRSLEKR) are excised as a propeptide.

It belongs to the conotoxin N superfamily. Contains 4 disulfide bonds. Expressed by the venom duct.

The protein localises to the secreted. This is Conotoxin Mr15.3 from Conus marmoreus (Marble cone).